Reading from the N-terminus, the 445-residue chain is Protein cereblon (445 aa).

The interval Met-1–Phe-50 is disordered. Acidic residues predominate over residues Glu-23–Asp-36. In terms of domain architecture, Lon N-terminal spans Ile-82 to Thr-321. The CULT domain occupies Cys-320 to Ile-428. Residues Cys-325 and Cys-328 each contribute to the Zn(2+) site. The (S)-thalidomide site is built by His-380, Trp-382, and Trp-388. Residues Cys-393 and Cys-396 each contribute to the Zn(2+) site.

It belongs to the CRBN family. In terms of assembly, component of a DCX (DDB1-CUL4-X-box) protein ligase complex. Interacts directly with DDB1.

It is found in the cytoplasm. The protein resides in the nucleus. Its pathway is protein modification; protein ubiquitination. Functionally, substrate recognition component of a DCX (DDB1-CUL4-X-box) E3 protein ligase complex that mediates the ubiquitination and subsequent proteasomal degradation of target proteins, such as MEIS2. Normal degradation of key regulatory proteins is required for normal limb outgrowth and expression of the fibroblast growth factor FGF8. Maintains presynaptic glutamate release and consequently cognitive functions, such as memory and learning, by negatively regulating large-conductance calcium-activated potassium (BK) channels in excitatory neurons. Likely to function by regulating the assembly and neuronal surface expression of BK channels via its interaction with KCNT1. May also be involved in regulating anxiety-like behaviors via a BK channel-independent mechanism. This chain is Protein cereblon (CRBN), found in Gallus gallus (Chicken).